The sequence spans 410 residues: S-adenosylmethionine synthase (410 aa).

Histidine 21 contributes to the ATP binding site. Aspartate 23 contributes to the Mg(2+) binding site. Residue glutamate 49 coordinates K(+). Residues glutamate 62 and glutamine 105 each contribute to the L-methionine site. Positions 105-115 (QSQEIGAGVDQ) are flexible loop. The segment at 107-133 (QEIGAGVDQSHEVRSGENTDADDQAGA) is disordered. ATP is bound by residues 180 to 182 (DGK), aspartate 261, 267 to 268 (RK), alanine 284, and lysine 288. Residue aspartate 261 participates in L-methionine binding. L-methionine is bound at residue lysine 292.

Belongs to the AdoMet synthase family. As to quaternary structure, homotetramer; dimer of dimers. Requires Mg(2+) as cofactor. The cofactor is K(+).

It is found in the cytoplasm. The catalysed reaction is L-methionine + ATP + H2O = S-adenosyl-L-methionine + phosphate + diphosphate. The protein operates within amino-acid biosynthesis; S-adenosyl-L-methionine biosynthesis; S-adenosyl-L-methionine from L-methionine: step 1/1. Its function is as follows. Catalyzes the formation of S-adenosylmethionine (AdoMet) from methionine and ATP. The overall synthetic reaction is composed of two sequential steps, AdoMet formation and the subsequent tripolyphosphate hydrolysis which occurs prior to release of AdoMet from the enzyme. This chain is S-adenosylmethionine synthase, found in Corynebacterium diphtheriae (strain ATCC 700971 / NCTC 13129 / Biotype gravis).